The chain runs to 402 residues: O-glucosyltransferase rumi homolog (402 aa).

The N-terminal stretch at 1–20 (MPYLEIVLALLVLSFQLGHS) is a signal peptide. 4 cysteine pairs are disulfide-bonded: C67-C74, C72-C375, C118-C124, and C279-C302. N-linked (GlcNAc...) asparagine glycosylation is present at N71. D149 acts as the Proton donor/acceptor in catalysis. The tract at residues 189–194 (AISLYP) is interaction with the consensus sequence C-X-S-X-[PA]-C in peptide substrates. Residues 226-230 (RGSRT), R234, 273-275 (VRL), and 291-295 (AASFR) each bind UDP-alpha-D-glucose.

The protein belongs to the glycosyltransferase 90 family.

It is found in the endoplasmic reticulum lumen. The protein resides in the secreted. It functions in the pathway protein modification; protein glycosylation. Its function is as follows. Protein O-glucosyltransferase. Catalyzes the reaction that attaches glucose through an O-glycosidic linkage to a conserved serine residue found in the consensus sequence C-X-S-X-[PA]-C in epidermal growth factor-like repeats. Regulates Notch signaling by glucosylating Notch in the ER, glucosylation is required for the correct folding and cleavage of Notch. This Aedes aegypti (Yellowfever mosquito) protein is O-glucosyltransferase rumi homolog.